The following is a 785-amino-acid chain: DNA ligase (785 aa).

Residues 32 to 36, 81 to 82, and E121 each bind NAD(+); these read DAEYD and SL. The active-site N6-AMP-lysine intermediate is the K123. Residues R144, E181, K294, and K318 each coordinate NAD(+). Zn(2+) is bound by residues C412, C415, C442, and C448. Positions 702–785 constitute a BRCT domain; it reads VEGLPEAGHT…AFLAKHNIPV (84 aa).

The protein belongs to the NAD-dependent DNA ligase family. LigA subfamily. The cofactor is Mg(2+). Requires Mn(2+) as cofactor.

It carries out the reaction NAD(+) + (deoxyribonucleotide)n-3'-hydroxyl + 5'-phospho-(deoxyribonucleotide)m = (deoxyribonucleotide)n+m + AMP + beta-nicotinamide D-nucleotide.. Functionally, DNA ligase that catalyzes the formation of phosphodiester linkages between 5'-phosphoryl and 3'-hydroxyl groups in double-stranded DNA using NAD as a coenzyme and as the energy source for the reaction. It is essential for DNA replication and repair of damaged DNA. The protein is DNA ligase of Pseudomonas fluorescens (strain SBW25).